Here is a 517-residue protein sequence, read N- to C-terminus: Ribose import ATP-binding protein RbsA 1 (517 aa).

ABC transporter domains follow at residues 11-251 (LEMR…VGRD) and 263-507 (YDPG…ALAT). Position 43 to 50 (43 to 50 (GENGAGKS)) interacts with ATP.

It belongs to the ABC transporter superfamily. Ribose importer (TC 3.A.1.2.1) family. As to quaternary structure, the complex is composed of an ATP-binding protein (RbsA), two transmembrane proteins (RbsC) and a solute-binding protein (RbsB).

Its subcellular location is the cell inner membrane. It catalyses the reaction D-ribose(out) + ATP + H2O = D-ribose(in) + ADP + phosphate + H(+). Part of the ABC transporter complex RbsABC involved in ribose import. Responsible for energy coupling to the transport system. The sequence is that of Ribose import ATP-binding protein RbsA 1 from Burkholderia cenocepacia (strain HI2424).